Reading from the N-terminus, the 351-residue chain is Photosystem II D2 protein (351 aa).

A helical membrane pass occupies residues Thr39–Thr59. His116 contributes to the chlorophyll a binding site. A helical transmembrane segment spans residues Gly123–Pro139. Pheophytin a is bound by residues Gln128 and Asn141. The helical transmembrane segment at Val151 to Ser164 threads the bilayer. His196 contacts chlorophyll a. A helical transmembrane segment spans residues Gly206–Glu226. The a plastoquinone site is built by His213 and Phe260. Fe cation is bound at residue His213. His267 contributes to the Fe cation binding site. A helical transmembrane segment spans residues Gly277 to Arg293.

Belongs to the reaction center PufL/M/PsbA/D family. PSII is composed of 1 copy each of membrane proteins PsbA, PsbB, PsbC, PsbD, PsbE, PsbF, PsbH, PsbI, PsbJ, PsbK, PsbL, PsbM, PsbT, PsbX, PsbY, PsbZ, Psb30/Ycf12, peripheral proteins PsbO, CyanoQ (PsbQ), PsbU, PsbV and a large number of cofactors. It forms dimeric complexes. The cofactor is The D1/D2 heterodimer binds P680, chlorophylls that are the primary electron donor of PSII, and subsequent electron acceptors. It shares a non-heme iron and each subunit binds pheophytin, quinone, additional chlorophylls, carotenoids and lipids. There is also a Cl(-1) ion associated with D1 and D2, which is required for oxygen evolution. The PSII complex binds additional chlorophylls, carotenoids and specific lipids..

The protein localises to the host cellular thylakoid membrane. The enzyme catalyses 2 a plastoquinone + 4 hnu + 2 H2O = 2 a plastoquinol + O2. In terms of biological role, photosystem II (PSII) is a light-driven water:plastoquinone oxidoreductase that uses light energy to abstract electrons from H(2)O, generating O(2) and a proton gradient subsequently used for ATP formation. It consists of a core antenna complex that captures photons, and an electron transfer chain that converts photonic excitation into a charge separation. The D1/D2 (PsbA/PsbD) reaction center heterodimer binds P680, the primary electron donor of PSII as well as several subsequent electron acceptors. D2 is needed for assembly of a stable PSII complex. This Synechococcus protein is Photosystem II D2 protein (psbD).